Consider the following 105-residue polypeptide: UPF0235 protein RF_1332 (105 aa).

The protein belongs to the UPF0235 family.

This Rickettsia felis (strain ATCC VR-1525 / URRWXCal2) (Rickettsia azadi) protein is UPF0235 protein RF_1332.